Here is a 107-residue protein sequence, read N- to C-terminus: Death-associated protein-like 1 (107 aa).

The tract at residues 1 to 26 (MANEVQVQLSPLKGGHPPAVKAGGKR) is disordered.

As to expression, detected in the corneal epithelium, and only in trace amounts in the liver, bladder, brain, heart, and stomach.

Functionally, may play a role in the early stages of epithelial differentiation or in apoptosis. This Bos taurus (Bovine) protein is Death-associated protein-like 1 (DAPL1).